A 650-amino-acid polypeptide reads, in one-letter code: NAC domain-containing protein 54 (650 aa).

Residues 6-156 form the NAC domain; the sequence is LPPGFRFHPT…AYALCRVFKK (151 aa). Residues 105–162 mediate DNA binding; that stretch reads VGMKKTLVYYRGRAPHGSRTDWVMHEYRLDERECETDTGLQDAYALCRVFKKTAPGPK.

Expressed in leaves, roots and flowers.

It localises to the nucleus. Functionally, transcription factor that functions as a regulator of the jasmonate (JA) signaling pathway. May regulate the expression of genes encoding JA biosynthetic enzymes, such as lipoxygenase 7 (CM-LOX1), allene oxide synthase 2 (AOS2) and OPDA reductase 7 (OPR7). Involved in abscisic acid-induced leaf senescence. Activates the abscisic acid (ABA) signaling-associated gene ABI5 and the senescence-associated gene NYC1 by directly binding to the mitochondrial dysfunction motif (MDM) present in their promoters. Possesses transcriptional activator activity in yeast. Required for the multiplication of the rice dwarf virus (RDV). The polypeptide is NAC domain-containing protein 54 (Oryza sativa subsp. japonica (Rice)).